Consider the following 951-residue polypeptide: Protocadherin-20 (951 aa).

The signal sequence occupies residues 1-60; the sequence is MRGRGNARSSQALGVSWCPATWHPRLDMGRLHRPRSSTSYRNLPHLFLFFLFVGPFSCLG. At 61–890 the chain is on the extracellular side; sequence SYSRATELLY…VESVSCMPTL (830 aa). Cadherin domains follow at residues 64-209, 210-320, 321-535, 536-639, 640-742, and 746-863; these read RATE…APQF, PVSQ…CPLF, TDSQ…APIF, LQPL…SPRF, INKD…PPLV, and QSNM…EPEI. N135 carries N-linked (GlcNAc...) asparagine glycosylation. N-linked (GlcNAc...) asparagine glycosylation is found at N326 and N332. N-linked (GlcNAc...) asparagine glycans are attached at residues N680, N748, N803, N844, and N849. The helical transmembrane segment at 891–911 threads the bilayer; that stretch reads VALSVISLGSITLVTGMGIYI. Residues 912 to 951 are Cytoplasmic-facing; it reads CLRKGEKHPREDENLEVQIPLKGKIDLHMRERKPMDISNI.

It localises to the cell membrane. Functionally, potential calcium-dependent cell-adhesion protein. This Homo sapiens (Human) protein is Protocadherin-20 (PCDH20).